Here is a 566-residue protein sequence, read N- to C-terminus: Probable cytochrome P450 519D1 (566 aa).

The chain crosses the membrane as a helical span at residues 1 to 21; sequence MNVFVLTFFICIIYLLFDLIK. Residues 471–491 are disordered; it reads FNNNNNNNNNNNNNNSNNKHK. The span at 472 to 487 shows a compositional bias: low complexity; the sequence is NNNNNNNNNNNNNNSN. Cysteine 510 is a binding site for heme.

Belongs to the cytochrome P450 family. Requires heme as cofactor.

It localises to the membrane. The chain is Probable cytochrome P450 519D1 (cyp519D1) from Dictyostelium discoideum (Social amoeba).